An 84-amino-acid polypeptide reads, in one-letter code: Cytochrome b559 subunit alpha (84 aa).

Residues 24–38 (IIHAVTLPAIFIAGF) form a helical membrane-spanning segment. Residue histidine 26 participates in heme binding.

It belongs to the PsbE/PsbF family. As to quaternary structure, heterodimer of an alpha subunit and a beta subunit. PSII is composed of 1 copy each of membrane proteins PsbA, PsbB, PsbC, PsbD, PsbE, PsbF, PsbH, PsbI, PsbJ, PsbK, PsbL, PsbM, PsbT, PsbX, PsbY, Psb30/Ycf12, peripheral proteins PsbO, CyanoQ (PsbQ), PsbU, PsbV and a large number of cofactors. It forms dimeric complexes. Requires heme b as cofactor.

It localises to the cellular thylakoid membrane. This b-type cytochrome is tightly associated with the reaction center of photosystem II (PSII). PSII is a light-driven water:plastoquinone oxidoreductase that uses light energy to abstract electrons from H(2)O, generating O(2) and a proton gradient subsequently used for ATP formation. It consists of a core antenna complex that captures photons, and an electron transfer chain that converts photonic excitation into a charge separation. The chain is Cytochrome b559 subunit alpha from Prochlorococcus marinus subsp. pastoris (strain CCMP1986 / NIES-2087 / MED4).